A 311-amino-acid polypeptide reads, in one-letter code: Aspartate carbamoyltransferase catalytic subunit (311 aa).

Positions 55 and 56 each coordinate carbamoyl phosphate. Residue Lys85 participates in L-aspartate binding. Carbamoyl phosphate contacts are provided by Arg106, His134, and Gln137. L-aspartate is bound by residues Arg167 and Arg228. Carbamoyl phosphate-binding residues include Leu266 and Pro267.

The protein belongs to the aspartate/ornithine carbamoyltransferase superfamily. ATCase family. As to quaternary structure, heterododecamer (2C3:3R2) of six catalytic PyrB chains organized as two trimers (C3), and six regulatory PyrI chains organized as three dimers (R2).

It carries out the reaction carbamoyl phosphate + L-aspartate = N-carbamoyl-L-aspartate + phosphate + H(+). It functions in the pathway pyrimidine metabolism; UMP biosynthesis via de novo pathway; (S)-dihydroorotate from bicarbonate: step 2/3. Functionally, catalyzes the condensation of carbamoyl phosphate and aspartate to form carbamoyl aspartate and inorganic phosphate, the committed step in the de novo pyrimidine nucleotide biosynthesis pathway. This is Aspartate carbamoyltransferase catalytic subunit from Psychromonas ingrahamii (strain DSM 17664 / CCUG 51855 / 37).